A 168-amino-acid polypeptide reads, in one-letter code: Phosphopantetheine adenylyltransferase (168 aa).

T14 lines the substrate pocket. Residues 14-15 (TF) and H22 contribute to the ATP site. Substrate-binding residues include K46, L78, and R92. ATP is bound by residues 93–95 (GLR), E103, and 128–134 (YSFISSS).

This sequence belongs to the bacterial CoaD family. In terms of assembly, homohexamer. Mg(2+) serves as cofactor.

It is found in the cytoplasm. It carries out the reaction (R)-4'-phosphopantetheine + ATP + H(+) = 3'-dephospho-CoA + diphosphate. The protein operates within cofactor biosynthesis; coenzyme A biosynthesis; CoA from (R)-pantothenate: step 4/5. Reversibly transfers an adenylyl group from ATP to 4'-phosphopantetheine, yielding dephospho-CoA (dPCoA) and pyrophosphate. This chain is Phosphopantetheine adenylyltransferase, found in Xanthomonas oryzae pv. oryzae (strain MAFF 311018).